Reading from the N-terminus, the 177-residue chain is Adenine phosphoribosyltransferase (177 aa).

This sequence belongs to the purine/pyrimidine phosphoribosyltransferase family. In terms of assembly, homodimer.

It is found in the cytoplasm. The catalysed reaction is AMP + diphosphate = 5-phospho-alpha-D-ribose 1-diphosphate + adenine. The protein operates within purine metabolism; AMP biosynthesis via salvage pathway; AMP from adenine: step 1/1. Its function is as follows. Catalyzes a salvage reaction resulting in the formation of AMP, that is energically less costly than de novo synthesis. This is Adenine phosphoribosyltransferase from Synechococcus sp. (strain RCC307).